The chain runs to 506 residues: Asparagine--tRNA ligase (506 aa).

Belongs to the class-II aminoacyl-tRNA synthetase family. As to quaternary structure, homodimer.

It is found in the cytoplasm. It catalyses the reaction tRNA(Asn) + L-asparagine + ATP = L-asparaginyl-tRNA(Asn) + AMP + diphosphate + H(+). The polypeptide is Asparagine--tRNA ligase (Onion yellows phytoplasma (strain OY-M)).